The following is a 465-amino-acid chain: 3-isopropylmalate dehydratase large subunit (465 aa).

Positions 347, 407, and 410 each coordinate [4Fe-4S] cluster.

This sequence belongs to the aconitase/IPM isomerase family. LeuC type 1 subfamily. As to quaternary structure, heterodimer of LeuC and LeuD. [4Fe-4S] cluster is required as a cofactor.

It carries out the reaction (2R,3S)-3-isopropylmalate = (2S)-2-isopropylmalate. The protein operates within amino-acid biosynthesis; L-leucine biosynthesis; L-leucine from 3-methyl-2-oxobutanoate: step 2/4. Its function is as follows. Catalyzes the isomerization between 2-isopropylmalate and 3-isopropylmalate, via the formation of 2-isopropylmaleate. The chain is 3-isopropylmalate dehydratase large subunit from Aeromonas hydrophila subsp. hydrophila (strain ATCC 7966 / DSM 30187 / BCRC 13018 / CCUG 14551 / JCM 1027 / KCTC 2358 / NCIMB 9240 / NCTC 8049).